The following is a 388-amino-acid chain: Succinate--CoA ligase [ADP-forming] subunit beta (388 aa).

The 236-residue stretch at 9–244 (KQLFARYGLP…HSQEDEREAH (236 aa)) folds into the ATP-grasp domain. Residues Lys46, 53 to 55 (GRG), Glu99, Thr102, and Glu107 contribute to the ATP site. Mg(2+) is bound by residues Asn199 and Asp213. Substrate-binding positions include Asn264 and 321–323 (GIV).

It belongs to the succinate/malate CoA ligase beta subunit family. As to quaternary structure, heterotetramer of two alpha and two beta subunits. Mg(2+) serves as cofactor.

The enzyme catalyses succinate + ATP + CoA = succinyl-CoA + ADP + phosphate. It catalyses the reaction GTP + succinate + CoA = succinyl-CoA + GDP + phosphate. It participates in carbohydrate metabolism; tricarboxylic acid cycle; succinate from succinyl-CoA (ligase route): step 1/1. Functionally, succinyl-CoA synthetase functions in the citric acid cycle (TCA), coupling the hydrolysis of succinyl-CoA to the synthesis of either ATP or GTP and thus represents the only step of substrate-level phosphorylation in the TCA. The beta subunit provides nucleotide specificity of the enzyme and binds the substrate succinate, while the binding sites for coenzyme A and phosphate are found in the alpha subunit. This chain is Succinate--CoA ligase [ADP-forming] subunit beta, found in Sodalis glossinidius (strain morsitans).